The primary structure comprises 382 residues: Gap junction alpha-1 protein (382 aa).

Topologically, residues 2–23 are cytoplasmic; it reads GDWSALGKLLDKVQAYSTAGGK. Ser5 carries the phosphoserine modification. The chain crosses the membrane as a helical span at residues 24-44; that stretch reads VWLSVLFIFRILLLGTAVESA. The Extracellular segment spans residues 45 to 76; it reads WGDEQSAFRCNTQQPGCENVCYDKSFPISHVR. 2 disulfides stabilise this stretch: Cys54–Cys192 and Cys187–Cys198. Residues 77 to 97 traverse the membrane as a helical segment; that stretch reads FWVLQIIFVSVPTLLYLAHVF. The Cytoplasmic portion of the chain corresponds to 98–155; the sequence is YVMRKEEKLNKKEEELKVAQTDGVNVDMHLKQIEIKKFKYGIEEHGKVKMRGGLLRTY. A Glycyl lysine isopeptide (Lys-Gly) (interchain with G-Cter in SUMO) cross-link involves residue Lys144. Residues 156-176 traverse the membrane as a helical segment; that stretch reads IISILFKSIFEVAFLLIQWYI. The Extracellular segment spans residues 177–207; that stretch reads YGFSLSAVYTCKRDPCPHQVDCFLSRPTEKT. The chain crosses the membrane as a helical span at residues 208–228; sequence IFIIFMLVVSLVSLALNIIEL. Over 229–382 the chain is Cytoplasmic; that stretch reads FYVFFKGVKD…SRPRPDDLEI (154 aa). Residue Lys237 forms a Glycyl lysine isopeptide (Lys-Gly) (interchain with G-Cter in SUMO) linkage. Residues 244-382 are interaction with NOV; that stretch reads SDPYHATSGA…SRPRPDDLEI (139 aa). Residue Tyr247 is modified to Phosphotyrosine. Residues Ser255 and Ser262 each carry the phosphoserine modification. The interaction with UBQLN4 stretch occupies residues 264-382; sequence KYAYFNGCSS…SRPRPDDLEI (119 aa). Residue Cys271 is modified to S-nitrosocysteine. Thr275 carries the phosphothreonine modification. Phosphoserine is present on residues Ser306 and Ser314. A compositionally biased stretch (polar residues) spans 317–332; the sequence is QNRMGQAGSTISNSHA. The interval 317–382 is disordered; it reads QNRMGQAGST…SRPRPDDLEI (66 aa). The residue at position 325 (Ser325) is a Phosphoserine; by CK1. Thr326 bears the Phosphothreonine mark. Phosphoserine; by CK1 occurs at positions 328 and 330. Phosphoserine occurs at positions 344 and 365. The span at 362-374 shows a compositional bias: low complexity; it reads RPSSRASSRASSR. Position 368 is a phosphoserine; by PKC/PRKCG and PKC/PRKCD (Ser368). A phosphoserine mark is found at Ser369 and Ser373.

The protein belongs to the connexin family. Alpha-type (group II) subfamily. As to quaternary structure, a connexon is composed of a hexamer of connexins. Interacts (via C-terminus) with TJP1. Interacts (via C-terminus) with SRC (via SH3 domain). Interacts (not ubiquitinated) with UBQLN4 (via UBA domain). Interacts with SGSM3 and CNST. Interacts with RIC1/CIP150. Interacts with CSNK1D. Interacts with NOV. Interacts with TMEM65. Interacts with ANK3/ANKG and PKP2. Post-translationally, phosphorylated at Ser-368 by PRKCG; phosphorylation induces disassembly of gap junction plaques and inhibition of gap junction activity. Phosphorylation at Ser-325, Ser-328 and Ser-330 by CK1 modulates gap junction assembly. Phosphorylation at Ser-368 by PRKCD triggers its internalization into small vesicles leading to proteasome-mediated degradation. In terms of processing, sumoylated with SUMO1, SUMO2 and SUMO3, which may regulate the level of functional Cx43 gap junctions at the plasma membrane. May be desumoylated by SENP1 or SENP2. S-nitrosylation at Cys-271 is enriched at the muscle endothelial gap junction in arteries, it augments channel permeability and may regulate of smooth muscle cell to endothelial cell communication. Post-translationally, acetylated in the developing cortex; leading to delocalization from the cell membrane. In terms of tissue distribution, expressed at intercalated disks in the heart (at protein level). Expressed in the fetal cochlea.

The protein resides in the cell membrane. Its subcellular location is the cell junction. The protein localises to the gap junction. It is found in the endoplasmic reticulum. Gap junction protein that acts as a regulator of bladder capacity. A gap junction consists of a cluster of closely packed pairs of transmembrane channels, the connexons, through which materials of low MW diffuse from one cell to a neighboring cell. May play a critical role in the physiology of hearing by participating in the recycling of potassium to the cochlear endolymph. Negative regulator of bladder functional capacity: acts by enhancing intercellular electrical and chemical transmission, thus sensitizing bladder muscles to cholinergic neural stimuli and causing them to contract. May play a role in cell growth inhibition through the regulation of NOV expression and localization. Plays an essential role in gap junction communication in the ventricles. The polypeptide is Gap junction alpha-1 protein (GJA1) (Homo sapiens (Human)).